A 246-amino-acid chain; its full sequence is 3-deoxy-manno-octulosonate cytidylyltransferase (246 aa).

This sequence belongs to the KdsB family.

The protein resides in the cytoplasm. It catalyses the reaction 3-deoxy-alpha-D-manno-oct-2-ulosonate + CTP = CMP-3-deoxy-beta-D-manno-octulosonate + diphosphate. The protein operates within nucleotide-sugar biosynthesis; CMP-3-deoxy-D-manno-octulosonate biosynthesis; CMP-3-deoxy-D-manno-octulosonate from 3-deoxy-D-manno-octulosonate and CTP: step 1/1. It participates in bacterial outer membrane biogenesis; lipopolysaccharide biosynthesis. Its function is as follows. Activates KDO (a required 8-carbon sugar) for incorporation into bacterial lipopolysaccharide in Gram-negative bacteria. The chain is 3-deoxy-manno-octulosonate cytidylyltransferase from Bradyrhizobium sp. (strain ORS 278).